The sequence spans 61 residues: Large ribosomal subunit protein uL30 (61 aa).

It belongs to the universal ribosomal protein uL30 family. In terms of assembly, part of the 50S ribosomal subunit.

In Chlorobaculum tepidum (strain ATCC 49652 / DSM 12025 / NBRC 103806 / TLS) (Chlorobium tepidum), this protein is Large ribosomal subunit protein uL30.